The primary structure comprises 444 residues: N-succinylarginine dihydrolase (444 aa).

Substrate-binding positions include 19–28 (AGLSFGNVAS), Asn-110, and 137–138 (HR). Residue Glu-174 is part of the active site. Arg-214 lines the substrate pocket. The active site involves His-250. Substrate contacts are provided by Asp-252 and Asn-362. Cys-368 (nucleophile) is an active-site residue.

The protein belongs to the succinylarginine dihydrolase family. Homodimer.

The catalysed reaction is N(2)-succinyl-L-arginine + 2 H2O + 2 H(+) = N(2)-succinyl-L-ornithine + 2 NH4(+) + CO2. Its pathway is amino-acid degradation; L-arginine degradation via AST pathway; L-glutamate and succinate from L-arginine: step 2/5. In terms of biological role, catalyzes the hydrolysis of N(2)-succinylarginine into N(2)-succinylornithine, ammonia and CO(2). The chain is N-succinylarginine dihydrolase from Shewanella oneidensis (strain ATCC 700550 / JCM 31522 / CIP 106686 / LMG 19005 / NCIMB 14063 / MR-1).